A 232-amino-acid chain; its full sequence is Ion-translocating oxidoreductase complex subunit E (232 aa).

A run of 6 helical transmembrane segments spans residues 18 to 38 (GLVQ…LTNA), 39 to 59 (LGLG…VSLV), 69 to 89 (IPVF…VINA), 93 to 113 (GLYL…VIIG), 128 to 148 (AFDG…LGAV), and 182 to 202 (SFLL…LIAG).

This sequence belongs to the NqrDE/RnfAE family. In terms of assembly, the complex is composed of six subunits: RnfA, RnfB, RnfC, RnfD, RnfE and RnfG.

It is found in the cell inner membrane. Functionally, part of a membrane-bound complex that couples electron transfer with translocation of ions across the membrane. The sequence is that of Ion-translocating oxidoreductase complex subunit E from Shewanella amazonensis (strain ATCC BAA-1098 / SB2B).